Reading from the N-terminus, the 610-residue chain is Preterminal protein (610 aa).

The tract at residues 288 to 379 (TLRSGTQTGL…ESFSDDVGLS (92 aa)) is disordered. The Nuclear localization signal motif lies at 328-337 (SLPIRRRRRR). A compositionally biased stretch (basic residues) spans 331–340 (IRRRRRRGTR). The span at 341 to 350 (RQVEREDSVR) shows a compositional bias: basic and acidic residues. Ser549 carries the O-(5'-phospho-DNA)-serine modification.

The protein belongs to the adenoviridae terminal protein family. Heterodimer with the polymerase; this heterodimer binds to bp 9 to 18 of the genome. Interacts with host POU2F1; POU2F1 binds to the auxiliary sequences in the inverted terminal repeats and tethers the pTP-POL heterodimer to the origin DNA thereby participating in the assembly of the pre-initiation complex (POL-TP-DBP-NFIA-POU2F1). In terms of processing, preterminal protein is used to replicate viral genome, upon genomic encapsidation it is processed first into iTP and finally into TP by adenovirus protease.

The protein resides in the host nucleus matrix. In terms of biological role, protein covalently bound to the viral DNA that acts as a primer for viral genomic replication by DNA strand displacement. Assembles on the viral origin of replication in an initiation complex with viral polymerase, DBP, host NFIA and host POU2F1/OCT1. During initiation, the polymerase covalently couples the first dCTP with Ser-580 of pTP. The terminal protein stimulates the template activity over 20 fold compared to protein-free templates. Neo-synthesized viral genomes are linked to two preterminal proteins, one for each 5' end. These new genomes are encapsidated in the nucleus, and during capsid maturation by viral protease, preterminal protein is first cleaved into intermediary (iTP), then into mature TP. May play a role in host nuclear matrix localization of genomic DNA. The chain is Preterminal protein from Snake adenovirus serotype 1 (SnAdV-1).